A 1385-amino-acid polypeptide reads, in one-letter code: MWTARHAVALLVVLTYAYSSILPPGTTFVQSIRDIFRFQEQLKKENVEDTICSETPPESSIPNRDELLELIRKSKIEDHKFDEHVRKKRQLSRISYQEYLDNLGKADYDVRIEEGWTEILYPFGTWAMDKQLMGQAGRETQTNLGFDCPFFGFRFNYTMVYPMGMLSFGLPPFSAPPWTFPNPAWPKQRDHSFVAAFYADAMFQWIGNTKISNVFFRSVHRPRLDDDEVYERNSQTNYGAPNYQQAGAQSAANQQFSNPSQYSQNLNAYSQNQQYNTQLLQQQQQIYGKRKKRQMPGRVSQPGMVVDPWLLDNITRHIQDGYTGANGFRAEHAFIATWYRMAHGGAARALDVSQFEHVKDWQNTFQVVLASDEIRTFAIFNYARLNWTSSNEAGGLDGFGGKQAAMAGFNGGNGTGWYGLPYSGEGRLWKLGYFSNVLTPGRWIHRVDEVIIPAGCTNASNGGMMTAPPWGPMHGGMAINVSGPCLRPADSVKVNFENWQTSCTRLSRVRARCIMPMFHKIGLVPIRMSRDGGQSFPFFGKFYVVNSERAPASVSLKDSVDNKTNRWYEPYAQELALGWQAMNLTWNTGARVDISLFGYWEDADRSHFERIDYLARGISNTGSYSFRPQQLTKQFLLRDAWQKFHFGFVQVALADAEDGVMWSKPTPFPWYHLHEWERYYGRNWPIDMCIEWFEYDGKRNNFQIDLTTDFPCPCKLPQAMLDLGRFMPIMDCDKDGDTSCPFNKGAQHCIQSVQPTFSGSSQQCCYDYDGYLMFTDDWEPDGDYTTFFQPGTPARAHRYGAAPYRLPPFIPTLSNYQLDLNPYRTCCKYADHCEFYYWRRMTNGCQDYRAPAAGYIYGEPHVITYDGIRYTMPGKGYYVLTMSDSPYHKLMVQVRLEQPDDTLWHAHVNATVITGVAVQENDSSIVQVYARKPMRRWRYRTDVYVDGTRRFFDKPHWKHQQFKHLDIRNPLQNMNQSEIVIMLKSGVGIRIFEGFGMLDVMVTLPPSYNTTCRPGESLSSSLNAPRGQRRCYTTLGLLGTYNNDPADDLTTPSGTVTRVQNPTTTASTTQMIYEQFASFWKIDGTNDKIGGVLFQDKFKPIYNPLLFAESDYRPVYWPQTIDMNASRVFTMEQVVSTCQNNPECEYDFIMTGRKEVGLTTLRRQKEFFALQKTGSKQLISCGPLLKKEGVVKTPPAANYLDGDKVVFSCKPKYYIHGDIERVCRNGTWSPGWWAWCRDRNLEYALKWMTALLSIFGISLIFVIFFCILWNIRKKKQAAHAERLQLKEQSDRLNKLENERIFGTSPEKTPLIETDFRSNFNMNQPSRPIPSQPPSSQYSPPVFAAPPPPSQPTRLPTYTNAISQQQRQFEPPRPPRGNMRFETSAI.

Residues 1 to 19 (MWTARHAVALLVVLTYAYS) form the signal peptide. N156 carries an N-linked (GlcNAc...) asparagine glycan. The interval 234-262 (SQTNYGAPNYQQAGAQSAANQQFSNPSQY) is disordered. Residues 242–261 (NYQQAGAQSAANQQFSNPSQ) show a composition bias toward low complexity. An NIDO domain is found at 285–450 (QIYGKRKKRQ…GRWIHRVDEV (166 aa)). N-linked (GlcNAc...) asparagine glycosylation is found at N313, N386, N413, N458, N480, N562, and N583. Residues 681–840 (GRNWPIDMCI…DHCEFYYWRR (160 aa)) form the AMOP domain. A VWFD domain is found at 852–1088 (AAGYIYGEPH…FWKIDGTNDK (237 aa)). Residues N909, N921, N975, N1009, and N1124 are each glycosylated (N-linked (GlcNAc...) asparagine). The Sushi domain occupies 1179 to 1238 (ISCGPLLKKEGVVKTPPAANYLDGDKVVFSCKPKYYIHGDIERVCRNGTWSPGWWAWCRD). Disulfide bonds link C1181–C1223 and C1209–C1236. N1225 carries an N-linked (GlcNAc...) asparagine glycan. Residues 1251–1271 (LLSIFGISLIFVIFFCILWNI) form a helical membrane-spanning segment. A disordered region spans residues 1321–1385 (MNQPSRPIPS…GNMRFETSAI (65 aa)).

As to expression, highly expressed in the intestinal epithelia.

Its subcellular location is the membrane. It localises to the cell junction. Functionally, may negatively regulate activity of innexin gap junction protein inx-16, thereby mediating the rhythmic frequency of the defecation motor program. Required for the clustering of inx-16 to the cell-cell junction of the intestinal epithelia. Probably dispensable for intestinal integrity. May be a cytokine receptor. In Caenorhabditis elegans, this protein is Defecation cycle abnormal dec-7.